Consider the following 116-residue polypeptide: T-cell leukemia/lymphoma protein 1A (116 aa).

This sequence belongs to the TCL1 family. In terms of assembly, homodimer. Interacts with AKT1, AKT2 and AKT3 (via PH domain). Interacts with PNPT1; the interaction has no effect on PNPT1 exonuclease activity.

It is found in the cytoplasm. The protein localises to the nucleus. The protein resides in the microsome. It localises to the endoplasmic reticulum. Functionally, enhances the phosphorylation and activation of AKT1 and AKT2. Enhances cell proliferation, stabilizes mitochondrial membrane potential and promotes cell survival. The chain is T-cell leukemia/lymphoma protein 1A (Tcl1a) from Mus musculus (Mouse).